The sequence spans 432 residues: Enolase (432 aa).

The tract at residues 41–64 (QVPSGASTGSFEAHELRDGDPKRY) is disordered. The segment covering 52 to 64 (EAHELRDGDPKRY) has biased composition (basic and acidic residues). Residue Q168 coordinates (2R)-2-phosphoglycerate. E211 serves as the catalytic Proton donor. Mg(2+) contacts are provided by D248, E289, and D316. K341, R370, S371, and K392 together coordinate (2R)-2-phosphoglycerate. K341 (proton acceptor) is an active-site residue.

Belongs to the enolase family. It depends on Mg(2+) as a cofactor.

Its subcellular location is the cytoplasm. It localises to the secreted. The protein resides in the cell surface. It catalyses the reaction (2R)-2-phosphoglycerate = phosphoenolpyruvate + H2O. It participates in carbohydrate degradation; glycolysis; pyruvate from D-glyceraldehyde 3-phosphate: step 4/5. In terms of biological role, catalyzes the reversible conversion of 2-phosphoglycerate (2-PG) into phosphoenolpyruvate (PEP). It is essential for the degradation of carbohydrates via glycolysis. The protein is Enolase of Synechocystis sp. (strain ATCC 27184 / PCC 6803 / Kazusa).